The sequence spans 496 residues: Cyclin-dependent kinase 16 (496 aa).

The disordered stretch occupies residues 1–95; the sequence is MDRMKKIKRQ…SATSSDEVQS (95 aa). Ser12 is subject to Phosphoserine; by BRSK2. Phosphoserine occurs at positions 36, 42, 64, 65, 78, 82, and 89. Over residues 69 to 78 the composition is skewed to basic and acidic residues; the sequence is IVHEDMKMGS. A compositionally biased stretch (polar residues) spans 83 to 93; it reads DQASATSSDEV. Position 95 is a phosphoserine; by CDK5 (Ser95). Phosphoserine occurs at positions 110, 119, 138, 146, 153, and 155. A Protein kinase domain is found at 165–446; that stretch reads YIKLDKLGEG…AEDARKHPFF (282 aa). ATP contacts are provided by residues 171 to 179 and Lys194; that span reads LGEGTYATV. Position 175 is a phosphothreonine (Thr175). Asp286 functions as the Proton acceptor in the catalytic mechanism. Thr380 carries the phosphothreonine modification. Phosphoserine is present on residues Ser391, Ser478, and Ser480.

The protein belongs to the protein kinase superfamily. CMGC Ser/Thr protein kinase family. CDC2/CDKX subfamily. Found in a complex containing CABLES1, CDK17 and TDRD7. Interacts with BRSK2. Identified in a complex with NSF, syntaxin-1, synaptotagmin, SYN1, SYP and CDK5R1. Interacts with YWHAH, YWHAQ and YWHAZ. Interacts with CCNY; this interaction increases the CDK16 kinase activity. Interacts with CCNYL1; this interaction mutually increases the stability of CDK16 and CCNYL1 and increases the kinase activity of CDK16. Interacts with NSF. In terms of processing, phosphorylation of CDK16 is essential for the binding of CCNY, but also essential for the regulation of CDK16 kinase activity. Phosphorylation of CDK16 is essential for the binding of CCNYl1, but also essential for the regulation of CDK16 kinase activity. Ser-146 and Ser-153 are the critical sites for the binding of CCNYL1 and for modulating CDK16 kinase activity. Phosphorylation at Ser-153 inhibits kinase activity. In terms of tissue distribution, highly expressed in testis and brain, and detected at lower levels in heart, skeletal muscle, adipose tissue, lung, spleen and pancreas (at protein level). Ubiquitous with highest levels in testis and brain, with longer form predominant in all tissues except the testis.

It localises to the cytoplasm. It is found in the cytoplasmic vesicle. The protein localises to the secretory vesicle. Its subcellular location is the cell membrane. The protein resides in the synapse. It localises to the synaptosome. It catalyses the reaction L-seryl-[protein] + ATP = O-phospho-L-seryl-[protein] + ADP + H(+). It carries out the reaction L-threonyl-[protein] + ATP = O-phospho-L-threonyl-[protein] + ADP + H(+). Functionally, protein kinase that plays a role in vesicle-mediated transport processes and exocytosis. Can phosphorylate CCNY at 'Ser-336' (in vitro). Plays a role in the regulation of insulin secretion in response to changes in blood glucose levels. Regulates GH1 release by brain neurons. Phosphorylates NSF, and thereby regulates NSF oligomerization. Required for normal spermatogenesis. Regulates neuron differentiation and dendrite development. This is Cyclin-dependent kinase 16 (Cdk16) from Mus musculus (Mouse).